Reading from the N-terminus, the 422-residue chain is UDP-N-acetylglucosamine 1-carboxyvinyltransferase (422 aa).

A phosphoenolpyruvate-binding site is contributed by 22–23 (KN). Arg93 contacts UDP-N-acetyl-alpha-D-glucosamine. Residue Cys117 is the Proton donor of the active site. Cys117 is subject to 2-(S-cysteinyl)pyruvic acid O-phosphothioketal. UDP-N-acetyl-alpha-D-glucosamine contacts are provided by residues 122 to 126 (RPVDQ), Asp305, and Ile327.

This sequence belongs to the EPSP synthase family. MurA subfamily.

It localises to the cytoplasm. It catalyses the reaction phosphoenolpyruvate + UDP-N-acetyl-alpha-D-glucosamine = UDP-N-acetyl-3-O-(1-carboxyvinyl)-alpha-D-glucosamine + phosphate. Its pathway is cell wall biogenesis; peptidoglycan biosynthesis. In terms of biological role, cell wall formation. Adds enolpyruvyl to UDP-N-acetylglucosamine. The chain is UDP-N-acetylglucosamine 1-carboxyvinyltransferase from Bordetella bronchiseptica (strain ATCC BAA-588 / NCTC 13252 / RB50) (Alcaligenes bronchisepticus).